A 279-amino-acid polypeptide reads, in one-letter code: Dermonecrotic toxin LbSicTox-alphaIB1a (279 aa).

Residue His-11 is part of the active site. Mg(2+) is bound by residues Glu-31 and Asp-33. Residue His-47 is the Nucleophile of the active site. Cystine bridges form between Cys-51–Cys-57 and Cys-53–Cys-196. Asp-91 contacts Mg(2+).

This sequence belongs to the arthropod phospholipase D family. Class II subfamily. Class IIa sub-subfamily. It depends on Mg(2+) as a cofactor. Expressed by the venom gland.

It localises to the secreted. The catalysed reaction is an N-(acyl)-sphingosylphosphocholine = an N-(acyl)-sphingosyl-1,3-cyclic phosphate + choline. It carries out the reaction an N-(acyl)-sphingosylphosphoethanolamine = an N-(acyl)-sphingosyl-1,3-cyclic phosphate + ethanolamine. It catalyses the reaction a 1-acyl-sn-glycero-3-phosphocholine = a 1-acyl-sn-glycero-2,3-cyclic phosphate + choline. The enzyme catalyses a 1-acyl-sn-glycero-3-phosphoethanolamine = a 1-acyl-sn-glycero-2,3-cyclic phosphate + ethanolamine. Its function is as follows. Dermonecrotic toxins cleave the phosphodiester linkage between the phosphate and headgroup of certain phospholipids (sphingolipid and lysolipid substrates), forming an alcohol (often choline) and a cyclic phosphate. This toxin acts on sphingomyelin (SM) with high activity (about 30.5-31.5 U/mg). It may also act on ceramide phosphoethanolamine (CPE), lysophosphatidylcholine (LPC) and lysophosphatidylethanolamine (LPE), but not on lysophosphatidylserine (LPS), and lysophosphatidylglycerol (LPG). It acts by transphosphatidylation, releasing exclusively cyclic phosphate products as second products. Induces dermonecrosis, hemolysis, increased vascular permeability, edema, inflammatory response, and platelet aggregation. Is lethal to mice. This is Dermonecrotic toxin LbSicTox-alphaIB1a from Loxosceles boneti (North American fiddleback spider).